Consider the following 148-residue polypeptide: Iron/alpha-ketoglutarate-dependent dioxygenase ausU (148 aa).

Positions 45 and 47 each coordinate Fe cation.

Belongs to the PhyH family. As to quaternary structure, homodimer. The cofactor is Fe cation.

The protein operates within secondary metabolite biosynthesis; terpenoid biosynthesis. In terms of biological role, iron/alpha-ketoglutarate-dependent dioxygenase; part of the gene cluster B that mediates the biosynthesis of austinol and dehydroaustinol, two fungal meroterpenoids. The first step of the pathway is the synthesis of 3,5-dimethylorsellinic acid by the polyketide synthase ausA. 3,5-dimethylorsellinic acid is then prenylated by the polyprenyl transferase ausN. Further epoxidation by the FAD-dependent monooxygenase ausM and cyclization by the probable terpene cyclase ausL lead to the formation of protoaustinoid A. Protoaustinoid A is then oxidized to spiro-lactone preaustinoid A3 by the combined action of the FAD-binding monooxygenases ausB and ausC, and the dioxygenase ausE. Acid-catalyzed keto-rearrangement and ring contraction of the tetraketide portion of preaustinoid A3 by ausJ lead to the formation of preaustinoid A4. The aldo-keto reductase ausK, with the help of ausH, is involved in the next step by transforming preaustinoid A4 into isoaustinone which is in turn hydroxylated by the P450 monooxygenase ausI to form austinolide. Finally, the cytochrome P450 monooxygenase ausG modifies austinolide to austinol. Austinol can be further modified to dehydroaustinol which forms a diffusible complex with diorcinol that initiates conidiation. Due to genetic rearrangements of the clusters and the subsequent loss of some enzymes, the end products of the Emericella nidulans austinoid biosynthesis clusters are austinol and dehydroaustinol, even if additional enzymes, such as the O-acetyltransferase ausQ and the cytochrome P450 monooxygenase ausR are still functional. The chain is Iron/alpha-ketoglutarate-dependent dioxygenase ausU from Emericella nidulans (strain FGSC A4 / ATCC 38163 / CBS 112.46 / NRRL 194 / M139) (Aspergillus nidulans).